A 393-amino-acid chain; its full sequence is NAD(P)H-quinone oxidoreductase subunit H, chloroplastic (393 aa).

It belongs to the complex I 49 kDa subunit family. NDH is composed of at least 16 different subunits, 5 of which are encoded in the nucleus.

It is found in the plastid. It localises to the chloroplast thylakoid membrane. It catalyses the reaction a plastoquinone + NADH + (n+1) H(+)(in) = a plastoquinol + NAD(+) + n H(+)(out). The catalysed reaction is a plastoquinone + NADPH + (n+1) H(+)(in) = a plastoquinol + NADP(+) + n H(+)(out). Functionally, NDH shuttles electrons from NAD(P)H:plastoquinone, via FMN and iron-sulfur (Fe-S) centers, to quinones in the photosynthetic chain and possibly in a chloroplast respiratory chain. The immediate electron acceptor for the enzyme in this species is believed to be plastoquinone. Couples the redox reaction to proton translocation, and thus conserves the redox energy in a proton gradient. The protein is NAD(P)H-quinone oxidoreductase subunit H, chloroplastic of Populus alba (White poplar).